We begin with the raw amino-acid sequence, 284 residues long: Bifunctional protein FolD (284 aa).

Residues 165-167 (GRS), serine 190, and valine 231 each bind NADP(+).

This sequence belongs to the tetrahydrofolate dehydrogenase/cyclohydrolase family. In terms of assembly, homodimer.

The enzyme catalyses (6R)-5,10-methylene-5,6,7,8-tetrahydrofolate + NADP(+) = (6R)-5,10-methenyltetrahydrofolate + NADPH. It catalyses the reaction (6R)-5,10-methenyltetrahydrofolate + H2O = (6R)-10-formyltetrahydrofolate + H(+). It functions in the pathway one-carbon metabolism; tetrahydrofolate interconversion. Catalyzes the oxidation of 5,10-methylenetetrahydrofolate to 5,10-methenyltetrahydrofolate and then the hydrolysis of 5,10-methenyltetrahydrofolate to 10-formyltetrahydrofolate. The polypeptide is Bifunctional protein FolD (Natranaerobius thermophilus (strain ATCC BAA-1301 / DSM 18059 / JW/NM-WN-LF)).